Here is a 545-residue protein sequence, read N- to C-terminus: DNA mismatch repair protein MutL (545 aa).

Residues 517–545 (RRSGARGGGEARPRPQEESFPEAPLPREP) form a disordered region.

Belongs to the DNA mismatch repair MutL/HexB family.

In terms of biological role, this protein is involved in the repair of mismatches in DNA. It is required for dam-dependent methyl-directed DNA mismatch repair. May act as a 'molecular matchmaker', a protein that promotes the formation of a stable complex between two or more DNA-binding proteins in an ATP-dependent manner without itself being part of a final effector complex. The protein is DNA mismatch repair protein MutL of Thermus thermophilus (strain ATCC 27634 / DSM 579 / HB8).